Consider the following 95-residue polypeptide: PIK3R3 upstream open reading frame protein (95 aa).

Positions 1–27 (MGPSRLVRGPRPQGMRSPYRRPGMGWP) are disordered.

The polypeptide is PIK3R3 upstream open reading frame protein (Homo sapiens (Human)).